A 422-amino-acid chain; its full sequence is Protein arginine methyltransferase NDUFAF7, mitochondrial (422 aa).

The transit peptide at 1 to 28 directs the protein to the mitochondrion; sequence MRTLLRLKRLMPEVLWTKRSCSSSSINK.

The protein belongs to the NDUFAF7 family.

It localises to the mitochondrion. The catalysed reaction is L-arginyl-[protein] + 2 S-adenosyl-L-methionine = N(omega),N(omega)'-dimethyl-L-arginyl-[protein] + 2 S-adenosyl-L-homocysteine + 2 H(+). Functionally, arginine methyltransferase involved in the assembly or stability of mitochondrial NADH:ubiquinone oxidoreductase complex (complex I). Acts by mediating symmetric dimethylation of 'Arg-118' of ndufs2 after it assembles into the complex I, stabilizing the early intermediate complex. This is Protein arginine methyltransferase NDUFAF7, mitochondrial from Danio rerio (Zebrafish).